Here is a 248-residue protein sequence, read N- to C-terminus: Transmembrane protein 223 (248 aa).

The next 3 membrane-spanning stretches (helical) occupy residues 46–68, 84–104, and 140–160; these read IFRP…AAVA, LLAI…HFAF, and YGFT…ALLF.

The protein belongs to the TMEM223 family.

The protein resides in the mitochondrion inner membrane. Functionally, mitochondrial ribosome-associated protein involved in the first steps of cytochrome c oxidase complex (complex IV) biogenesis. Stimulates the translation of MT-CO1 mRNA and is a constituent of early MT-CO1 assembly intermediates. This is Transmembrane protein 223 from Danio rerio (Zebrafish).